Consider the following 471-residue polypeptide: Variant surface glycoprotein WRATAT A (471 aa).

An N-terminal signal peptide occupies residues 1 to 18 (MSVLFLLLAITRTASVKA). 2 N-linked (GlcNAc...) asparagine glycosylation sites follow: asparagine 61 and asparagine 133. Residues 373 to 457 (QEQTLATTGT…ANTTGSSNSF (85 aa)) form a disordered region. Low complexity predominate over residues 379–392 (TTGTKSSSPQSTQQ). Cystine bridges form between cysteine 401/cysteine 414 and cysteine 410/cysteine 427. Residues 401-447 (CNDKAKETECNSPCKWDKEEKDEKKRCKLSEEGKQAEKENQEGKDGK) are compositionally biased toward basic and acidic residues. Residues 448–457 (ANTTGSSNSF) show a composition bias toward polar residues. N-linked (GlcNAc...) asparagine glycosylation occurs at asparagine 449. Residue serine 454 is the site of GPI-anchor amidated serine attachment. Positions 455–471 (NSFVIKTSPLLLAVLLL) are cleaved as a propeptide — removed in mature form.

Its subcellular location is the cell membrane. Functionally, VSG forms a coat on the surface of the parasite. The trypanosome evades the immune response of the host by expressing a series of antigenically distinct VSGs from an estimated 1000 VSG genes. The sequence is that of Variant surface glycoprotein WRATAT A from Trypanosoma brucei rhodesiense.